The following is an 86-amino-acid chain: Large ribosomal subunit protein bL27 (86 aa).

The disordered stretch occupies residues 1 to 20; the sequence is MAHKKAGGSSRNGRDSESKR.

It belongs to the bacterial ribosomal protein bL27 family.

The protein is Large ribosomal subunit protein bL27 of Paraburkholderia phymatum (strain DSM 17167 / CIP 108236 / LMG 21445 / STM815) (Burkholderia phymatum).